Here is a 453-residue protein sequence, read N- to C-terminus: Trigger factor (453 aa).

The PPIase FKBP-type domain maps to Gly-171–Ser-256.

It belongs to the FKBP-type PPIase family. Tig subfamily.

Its subcellular location is the cytoplasm. The catalysed reaction is [protein]-peptidylproline (omega=180) = [protein]-peptidylproline (omega=0). Its function is as follows. Involved in protein export. Acts as a chaperone by maintaining the newly synthesized protein in an open conformation. Functions as a peptidyl-prolyl cis-trans isomerase. This chain is Trigger factor, found in Rhodopseudomonas palustris (strain BisB18).